We begin with the raw amino-acid sequence, 176 residues long: Probable fimbrial subunit LpfE (176 aa).

A signal peptide spans 1 to 23 (MKFKRLLHSGIASLSLVACGVNA).

It belongs to the fimbrial protein family.

The protein localises to the fimbrium. Functionally, part of the lpfABCC'DE fimbrial operon. LP fimbriae may participate in the interaction with eukaryotic cells by assisting in microcolony formation. This chain is Probable fimbrial subunit LpfE (lpfE), found in Escherichia coli O157:H7.